The sequence spans 184 residues: MLQQLLSNAFTMVLIILVINIVYVSFSTMRLILTMKGRRYAAAFAGTIEMLIYVIGLSIVLDNLDQIQNVIAYALGYGMGIIVGMKIEEKLALGYTTVNVITKELDVDLPRQLREKGYGVTSWVAGGLEGDRTALQILTPRKYELQLYETIKTLDSKAFIISYEPKSIHGGFWVKAVKKRRIKE.

3 helical membrane-spanning segments follow: residues alanine 9–methionine 29, alanine 41–leucine 61, and isoleucine 67–isoleucine 87.

It belongs to the UPF0316 family.

The protein resides in the cell membrane. The polypeptide is UPF0316 protein BPUM_0594 (Bacillus pumilus (strain SAFR-032)).